Reading from the N-terminus, the 138-residue chain is Putative pre-16S rRNA nuclease (138 aa).

The protein belongs to the YqgF nuclease family.

The protein localises to the cytoplasm. Its function is as follows. Could be a nuclease involved in processing of the 5'-end of pre-16S rRNA. In Helicobacter hepaticus (strain ATCC 51449 / 3B1), this protein is Putative pre-16S rRNA nuclease.